We begin with the raw amino-acid sequence, 142 residues long: Cytochrome b5-related protein (142 aa).

The Cytochrome b5 heme-binding domain maps to 16-100 (PTYRNSAPVT…IAKYKVRDAY (85 aa)). Heme contacts are provided by His-59 and His-82.

It belongs to the cytochrome b5 family.

In terms of biological role, may play a role in muscle cell metabolism. The sequence is that of Cytochrome b5-related protein (Cyt-b5-r) from Drosophila virilis (Fruit fly).